We begin with the raw amino-acid sequence, 311 residues long: Homoserine O-acetyltransferase (311 aa).

The active-site Acyl-thioester intermediate is Cys142. Lys163 and Ser192 together coordinate substrate. His235 functions as the Proton acceptor in the catalytic mechanism. Glu237 is an active-site residue. Arg249 serves as a coordination point for substrate.

Belongs to the MetA family.

It localises to the cytoplasm. The enzyme catalyses L-homoserine + acetyl-CoA = O-acetyl-L-homoserine + CoA. The protein operates within amino-acid biosynthesis; L-methionine biosynthesis via de novo pathway; O-acetyl-L-homoserine from L-homoserine: step 1/1. Its function is as follows. Transfers an acetyl group from acetyl-CoA to L-homoserine, forming acetyl-L-homoserine. In Lysinibacillus sphaericus (strain C3-41), this protein is Homoserine O-acetyltransferase.